A 30-amino-acid polypeptide reads, in one-letter code: Trypsin inhibitor 7 (30 aa).

Cystine bridges form between C4-C21, C11-C23, and C17-C29.

Belongs to the protease inhibitor I7 (squash-type serine protease inhibitor) family.

Its subcellular location is the secreted. In terms of biological role, strongly inhibits trypsin, weakly inhibits chymotrypsin. The sequence is that of Trypsin inhibitor 7 from Cyclanthera pedata (Achocha).